The sequence spans 707 residues: Ribosome biogenesis protein ENP2 (707 aa).

5 WD repeats span residues 54–94 (EFSE…LKFD), 178–217 (LDTE…RVSK), 226–265 (NRPF…PSII), 269–310 (GYGF…AYAS), and 312–351 (EPSV…PSPR). The disordered stretch occupies residues 523–707 (LTAAEESDEE…RASKNAFRGM (185 aa)). Serine 529 carries the phosphoserine modification. Basic and acidic residues predominate over residues 532-544 (ERIAMKDGRGHYD). Residues 545 to 558 (YEDEESDEEESDDE) are compositionally biased toward acidic residues. Residues serine 550 and serine 555 each carry the phosphoserine modification. Basic and acidic residues-rich tracts occupy residues 559–598 (TNQK…RFMN), 629–647 (ENGK…RGEA), 659–671 (KDGN…HDNS), and 680–697 (NGNK…ENRR).

It belongs to the WD repeat NOL10/ENP2 family. In terms of assembly, component of the 90S pre-ribosomes.

It localises to the nucleus. It is found in the nucleolus. Functionally, may be involved in rRNA-processing and ribosome biosynthesis. The sequence is that of Ribosome biogenesis protein ENP2 (ENP2) from Saccharomyces cerevisiae (strain ATCC 204508 / S288c) (Baker's yeast).